A 362-amino-acid chain; its full sequence is Heme A synthase (362 aa).

The next 5 membrane-spanning stretches (helical) occupy residues 15–35 (VRIW…VGGA), 104–124 (VIGI…AIAP), 129–149 (ALWA…WMVA), 161–181 (VRLA…VWTL), and 200–220 (AIAL…VAGL). His264 is a heme binding site. Helical transmembrane passes span 266–285 (MMAY…ALRA), 293–313 (GALW…LTLL), and 316–336 (VPIG…TLAV). His324 is a heme binding site.

Belongs to the COX15/CtaA family. Type 2 subfamily. In terms of assembly, interacts with CtaB. Heme b is required as a cofactor.

The protein resides in the cell membrane. The enzyme catalyses Fe(II)-heme o + 2 A + H2O = Fe(II)-heme a + 2 AH2. It functions in the pathway porphyrin-containing compound metabolism; heme A biosynthesis; heme A from heme O: step 1/1. Its function is as follows. Catalyzes the conversion of heme O to heme A by two successive hydroxylations of the methyl group at C8. The first hydroxylation forms heme I, the second hydroxylation results in an unstable dihydroxymethyl group, which spontaneously dehydrates, resulting in the formyl group of heme A. The chain is Heme A synthase from Rhodopseudomonas palustris (strain BisB5).